The following is a 227-amino-acid chain: PKHD-type hydroxylase Mnod_1077 (227 aa).

Residues 78-178 form the Fe2OG dioxygenase domain; sequence RVLPPLFNRY…RWSAFFWSQS (101 aa). Histidine 96, aspartate 98, and histidine 159 together coordinate Fe cation. Residue arginine 169 participates in 2-oxoglutarate binding.

Fe(2+) is required as a cofactor. L-ascorbate serves as cofactor.

In Methylobacterium nodulans (strain LMG 21967 / CNCM I-2342 / ORS 2060), this protein is PKHD-type hydroxylase Mnod_1077.